The primary structure comprises 325 residues: NADH-quinone oxidoreductase subunit H (325 aa).

8 helical membrane-spanning segments follow: residues 11 to 31 (ILLT…CGAF), 81 to 101 (VIFT…FAIV), 114 to 134 (IGIL…LFAG), 154 to 174 (LSYE…AGSF), 186 to 206 (VWNV…GVAV), 237 to 257 (FFVG…TLFF), 265 to 285 (LPPF…FILI), and 304 to 324 (ICLP…LWQA).

This sequence belongs to the complex I subunit 1 family. NDH-1 is composed of 13 different subunits. Subunits NuoA, H, J, K, L, M, N constitute the membrane sector of the complex.

The protein resides in the cell inner membrane. It carries out the reaction a quinone + NADH + 5 H(+)(in) = a quinol + NAD(+) + 4 H(+)(out). Its function is as follows. NDH-1 shuttles electrons from NADH, via FMN and iron-sulfur (Fe-S) centers, to quinones in the respiratory chain. The immediate electron acceptor for the enzyme in this species is believed to be ubiquinone. Couples the redox reaction to proton translocation (for every two electrons transferred, four hydrogen ions are translocated across the cytoplasmic membrane), and thus conserves the redox energy in a proton gradient. This subunit may bind ubiquinone. This Escherichia coli O7:K1 (strain IAI39 / ExPEC) protein is NADH-quinone oxidoreductase subunit H.